The following is a 566-amino-acid chain: MADAAIHGHEHDRRGFFTRWFMSTNHKDIGVLYLFTGGLVGLISVAFTVYMRMELMAPGVQFMCAEHLESGLVKGFFQSLWPSAVENCTPNGHLWNVMITGHGILMMFFVVIPALFGGFGNYFMPLHIGAPDMAFPRMNNLSYWLYVAGTSLAVASLFAPGGNGQLGSGIGWVLYPPLSTSESGYSTDLAIFAVHLSGASSILGAINMITTFLNMRAPGMTMHKVPLFAWSIFVTAWLILLALPVLAGAITMLLTDRNFGTTFFQPSGGGDPVLYQHILWFFGHPEVYIIVLPAFGIVSHVIATFAKKPIFGYLPMVYAMVAIGVLGFVVWAHHMYTAGLSLTQQSYFMMATMVIAVPTGIKIFSWIATMWGGSIELKTPMLWALGFLFLFTVGGVTGIVLSQASVDRYYHDTYYVVAHFHYVMSLGAVFGIFAGIYFWIGKMSGRQYPEWAGKLHFWMMFVGANLTFFPQHFLGRQGMPRRYIDYPEAFATWNFVSSLGAFLSFASFLFFLGVIFYTLTRGARVTANNYWNEHADTLEWTLTSPPPEHTFEQLPKREDWERAPAH.

7 helical membrane passes run isoleucine 29–valine 49, valine 97–glycine 117, leucine 141–glycine 161, leucine 189–isoleucine 209, leucine 227–alanine 247, isoleucine 278–valine 298, and isoleucine 310–valine 330. Histidine 102 is a binding site for Fe(II)-heme a. Positions 284 and 288 each coordinate Cu cation. The segment at residues histidine 284–tyrosine 288 is a cross-link (1'-histidyl-3'-tyrosine (His-Tyr)). Cu cation-binding residues include histidine 333 and histidine 334. The next 2 helical transmembrane spans lie at phenylalanine 348–alanine 368 and methionine 381–leucine 401. Position 419 (histidine 419) interacts with heme a3. Transmembrane regions (helical) follow at residues phenylalanine 420–isoleucine 440, leucine 455–glycine 475, and leucine 499–leucine 519. Residue histidine 421 coordinates Fe(II)-heme a. Residues threonine 543–histidine 566 form a disordered region. Basic and acidic residues predominate over residues histidine 549–histidine 566.

This sequence belongs to the heme-copper respiratory oxidase family. Requires Cu(2+) as cofactor. Heme is required as a cofactor.

The protein resides in the cell membrane. The catalysed reaction is 4 Fe(II)-[cytochrome c] + O2 + 8 H(+)(in) = 4 Fe(III)-[cytochrome c] + 2 H2O + 4 H(+)(out). It participates in energy metabolism; oxidative phosphorylation. In terms of biological role, cytochrome c oxidase is the component of the respiratory chain that catalyzes the reduction of oxygen to water. Subunits 1-3 form the functional core of the enzyme complex. Co I is the catalytic subunit of the enzyme. Electrons originating in cytochrome c are transferred via the copper A center of subunit 2 and heme a of subunit 1 to the bimetallic center formed by heme a3 and copper B. This cytochrome c oxidase shows proton pump activity across the membrane in addition to the electron transfer. The chain is Cytochrome c oxidase subunit 1 (ctaD) from Cereibacter sphaeroides (Rhodobacter sphaeroides).